A 513-amino-acid chain; its full sequence is ATP synthase subunit alpha (513 aa).

Residue 169–176 (GDRQCGKT) participates in ATP binding.

This sequence belongs to the ATPase alpha/beta chains family. F-type ATPases have 2 components, CF(1) - the catalytic core - and CF(0) - the membrane proton channel. CF(1) has five subunits: alpha(3), beta(3), gamma(1), delta(1), epsilon(1). CF(0) has three main subunits: a(1), b(2) and c(9-12). The alpha and beta chains form an alternating ring which encloses part of the gamma chain. CF(1) is attached to CF(0) by a central stalk formed by the gamma and epsilon chains, while a peripheral stalk is formed by the delta and b chains.

The protein resides in the cell inner membrane. It carries out the reaction ATP + H2O + 4 H(+)(in) = ADP + phosphate + 5 H(+)(out). Functionally, produces ATP from ADP in the presence of a proton gradient across the membrane. The alpha chain is a regulatory subunit. The sequence is that of ATP synthase subunit alpha from Burkholderia orbicola (strain AU 1054).